Consider the following 292-residue polypeptide: Probable endonuclease lcl3 (292 aa).

The interval 1–27 (MRWPPWSSESTNDEQKQTPSSWLSSAA) is disordered. The segment covering 17–27 (QTPSSWLSSAA) has biased composition (polar residues). Residues 45–61 (IIPTVVLTSGILIAVRF) traverse the membrane as a helical segment. The region spanning 83-250 (RSIFGQVTSV…KKRARGLWKD (168 aa)) is the TNase-like domain. Arg134 is a catalytic residue. Residue Asp139 coordinates Ca(2+). Active-site residues include Glu142 and Arg182. Residues 257–292 (GWESPREYKNRMGMGDPLPIEKGNGKGNGKGKIGQK) form a disordered region. The span at 281-292 (GKGNGKGKIGQK) shows a compositional bias: gly residues.

Belongs to the LCL3 family.

It localises to the mitochondrion. The protein localises to the membrane. The chain is Probable endonuclease lcl3 (lcl3) from Penicillium rubens (strain ATCC 28089 / DSM 1075 / NRRL 1951 / Wisconsin 54-1255) (Penicillium chrysogenum).